Consider the following 146-residue polypeptide: Anti-sigma F factor (146 aa).

Belongs to the anti-sigma-factor family.

The enzyme catalyses L-seryl-[protein] + ATP = O-phospho-L-seryl-[protein] + ADP + H(+). It catalyses the reaction L-threonyl-[protein] + ATP = O-phospho-L-threonyl-[protein] + ADP + H(+). In terms of biological role, binds to sigma F and blocks its ability to form an RNA polymerase holoenzyme (E-sigma F). Phosphorylates SpoIIAA on a serine residue. This phosphorylation may enable SpoIIAA to act as an anti-anti-sigma factor that counteracts SpoIIAB and thus releases sigma F from inhibition. This is Anti-sigma F factor from Bacillus licheniformis (strain ATCC 14580 / DSM 13 / JCM 2505 / CCUG 7422 / NBRC 12200 / NCIMB 9375 / NCTC 10341 / NRRL NRS-1264 / Gibson 46).